Consider the following 354-residue polypeptide: UPF0283 membrane protein HI_0043 (354 aa).

3 helical membrane passes run 57–77, 87–107, and 211–231; these read LLKFTALLFGLATVAQSVQWI, IYLAFALVSLIIILLGIKEII, and ESAVIVAISPLAVVDMFFIAW.

It belongs to the UPF0283 family.

It localises to the cell inner membrane. This chain is UPF0283 membrane protein HI_0043, found in Haemophilus influenzae (strain ATCC 51907 / DSM 11121 / KW20 / Rd).